The chain runs to 416 residues: Cotranscriptional regulator ARB2A (416 aa).

Residues 1–18 (MSISLSSLILLPIWINMA) form the signal peptide. Residues 208–247 (KPKIHVQSSSDSSDEPAEKRERKDKVSKETKKRRDFYEKY) form a disordered region. The span at 223-236 (PAEKRERKDKVSKE) shows a compositional bias: basic and acidic residues. Residue Ser-293 is the Nucleophile of the active site. A Prevents secretion from ER motif is present at residues 413–416 (HEEL).

It belongs to the ARB2A family. Interacts with AGO2. Found in a complex, composed of AGO2, CHD7 and ARB2A.

The protein localises to the nucleus. It localises to the cytoplasm. Its subcellular location is the endoplasmic reticulum. Plays a role in the regulation of alternative splicing, by interacting with AGO2 and CHD7. Seems to be required for stabilizing protein-protein interactions at the chromatin-spliceosome interface. May have hydrolase activity. The sequence is that of Cotranscriptional regulator ARB2A from Homo sapiens (Human).